Consider the following 34-residue polypeptide: Protamine (34 aa).

Residues 1–34 (PRRRRQASRPVRRRRRTRRSTAERRRRRVVRRRR) form a disordered region.

As to expression, testis.

It is found in the nucleus. The protein localises to the chromosome. In terms of biological role, protamines substitute for histones in the chromatin of sperm during the haploid phase of spermatogenesis. They compact sperm DNA into a highly condensed, stable and inactive complex. This is Protamine from Dicentrarchus labrax (European seabass).